The following is a 180-amino-acid chain: Pro-glucagon (180 aa).

The N-terminal stretch at 1–20 is a signal peptide; the sequence is MKSVYFVAGLFIMLAQGSWQ. Residues 23–58 form a disordered region; that stretch reads LQDTEEKPRSVSASQTDMLDDPDQMNEDKRHSQGTF. Serine 54 carries the phosphoserine modification. The propeptide occupies 84–89; that stretch reads NRNNIA. 2 positions are modified to phosphoserine: serine 105 and serine 108. At arginine 127 the chain carries Arginine amide. The propeptide occupies 131–145; that stretch reads DFPEEVAIVEELGRR. 2 positions are modified to phosphoserine: serine 150 and serine 152.

The protein belongs to the glucagon family. Post-translationally, proglucagon is post-translationally processed in a tissue-specific manner in pancreatic A cells and intestinal L cells. In pancreatic A cells, the major bioactive hormone is glucagon cleaved by PCSK2/PC2. In the intestinal L cells PCSK1/PC1 liberates GLP-1, GLP-2, glicentin and oxyntomodulin. GLP-1 is further N-terminally truncated by post-translational processing in the intestinal L cells resulting in GLP-1(7-37) GLP-1-(7-36)amide. The C-terminal amidation is neither important for the metabolism of GLP-1 nor for its effects on the endocrine pancreas.

The protein resides in the secreted. Its function is as follows. Plays a key role in glucose metabolism and homeostasis. Regulates blood glucose by increasing gluconeogenesis and decreasing glycolysis. A counterregulatory hormone of insulin, raises plasma glucose levels in response to insulin-induced hypoglycemia. Plays an important role in initiating and maintaining hyperglycemic conditions in diabetes. Potent stimulator of glucose-dependent insulin release. Also stimulates insulin release in response to IL6. Plays important roles on gastric motility and the suppression of plasma glucagon levels. May be involved in the suppression of satiety and stimulation of glucose disposal in peripheral tissues, independent of the actions of insulin. Has growth-promoting activities on intestinal epithelium. May also regulate the hypothalamic pituitary axis (HPA) via effects on LH, TSH, CRH, oxytocin, and vasopressin secretion. Increases islet mass through stimulation of islet neogenesis and pancreatic beta cell proliferation. Inhibits beta cell apoptosis. Functionally, stimulates intestinal growth and up-regulates villus height in the small intestine, concomitant with increased crypt cell proliferation and decreased enterocyte apoptosis. The gastrointestinal tract, from the stomach to the colon is the principal target for GLP-2 action. Plays a key role in nutrient homeostasis, enhancing nutrient assimilation through enhanced gastrointestinal function, as well as increasing nutrient disposal. Stimulates intestinal glucose transport and decreases mucosal permeability. In terms of biological role, significantly reduces food intake. Inhibits gastric emptying in humans. Suppression of gastric emptying may lead to increased gastric distension, which may contribute to satiety by causing a sensation of fullness. Its function is as follows. May modulate gastric acid secretion and the gastro-pyloro-duodenal activity. May play an important role in intestinal mucosal growth in the early period of life. In Cavia porcellus (Guinea pig), this protein is Pro-glucagon (GCG).